Consider the following 1406-residue polypeptide: DNA-directed RNA polymerase subunit beta' (1406 aa).

Zn(2+) contacts are provided by cysteine 70, cysteine 72, cysteine 85, and cysteine 88. Positions 460, 462, and 464 each coordinate Mg(2+). Zn(2+)-binding residues include cysteine 814, cysteine 888, cysteine 895, and cysteine 898.

This sequence belongs to the RNA polymerase beta' chain family. The RNAP catalytic core consists of 2 alpha, 1 beta, 1 beta' and 1 omega subunit. When a sigma factor is associated with the core the holoenzyme is formed, which can initiate transcription. Mg(2+) serves as cofactor. The cofactor is Zn(2+).

The catalysed reaction is RNA(n) + a ribonucleoside 5'-triphosphate = RNA(n+1) + diphosphate. Functionally, DNA-dependent RNA polymerase catalyzes the transcription of DNA into RNA using the four ribonucleoside triphosphates as substrates. The protein is DNA-directed RNA polymerase subunit beta' of Photorhabdus laumondii subsp. laumondii (strain DSM 15139 / CIP 105565 / TT01) (Photorhabdus luminescens subsp. laumondii).